The following is a 662-amino-acid chain: PAN2-PAN3 deadenylation complex subunit PAN3 (662 aa).

2 disordered regions span residues 1–26 (MASA…AREN) and 59–131 (TTYQ…RAET). The C3H1-type zinc-finger motif lies at 26–55 (NAKDTLCRNVTIYGRCRYEDKGCAFNHDPH). Polar residues predominate over residues 72–85 (DSPSFTPSLLSSNG). Residues 86 to 102 (SSPTTASVTAKKAATIS) are compositionally biased toward low complexity. Residues 114-126 (RNITSRSNTSTPS) are compositionally biased toward polar residues. A pseudokinase domain region spans residues 265–525 (QTLPNTQLPA…NIDIFITGIS (261 aa)). Residues arginine 317, 366-373 (DYHPLSKT), and 425-426 (SK) contribute to the ATP site. Residues 526–564 (SQLMSTFDSALHLDDELTSDLSRELENGRLVRLVTKLNF) are a coiled coil. The segment at 565-662 (VNERPEYEHD…ALLKPTRRLH (98 aa)) is knob domain.

Belongs to the protein kinase superfamily. PAN3 family. In terms of assembly, homodimer. Forms a heterotrimer with a catalytic subunit pan2 to form the poly(A)-nuclease (PAN) deadenylation complex. Interacts (via PAM-2 motif) with poly(A)-binding protein pab1 (via PABC domain), conferring substrate specificity of the enzyme complex.

Its subcellular location is the cytoplasm. Functionally, regulatory subunit of the poly(A)-nuclease (PAN) deadenylation complex, one of two cytoplasmic mRNA deadenylases involved in mRNA turnover. PAN specifically shortens poly(A) tails of RNA and the activity is stimulated by poly(A)-binding protein pab1. PAN deadenylation is followed by rapid degradation of the shortened mRNA tails by the CCR4-NOT complex. Deadenylated mRNAs are then degraded by two alternative mechanisms, namely exosome-mediated 3'-5' exonucleolytic degradation, or deadenylation-dependent mRNA decaping and subsequent 5'-3' exonucleolytic degradation by xrn1. May also be involved in post-transcriptional maturation of mRNA poly(A) tails. pan3 acts as a positive regulator for PAN activity, recruiting the catalytic subunit pan2 to mRNA via its interaction with RNA and with pab1. In Aspergillus oryzae (strain ATCC 42149 / RIB 40) (Yellow koji mold), this protein is PAN2-PAN3 deadenylation complex subunit PAN3.